A 132-amino-acid polypeptide reads, in one-letter code: Flagellar assembly factor FliW (132 aa).

It belongs to the FliW family. Interacts with translational regulator CsrA and flagellin(s).

The protein resides in the cytoplasm. Functionally, acts as an anti-CsrA protein, binds CsrA and prevents it from repressing translation of its target genes, one of which is flagellin. Binds to flagellin and participates in the assembly of the flagellum. This Borreliella afzelii (strain PKo) (Borrelia afzelii) protein is Flagellar assembly factor FliW.